Consider the following 399-residue polypeptide: PCI domain-containing protein 2 (399 aa).

Residues 210–391 enclose the PCI domain; the sequence is VTYKYYVGRK…QKLVVSKQNP (182 aa).

This sequence belongs to the CSN12 family.

The chain is PCI domain-containing protein 2 (pcid2) from Danio rerio (Zebrafish).